A 140-amino-acid chain; its full sequence is uncharacterized protein (140 aa).

This is an uncharacterized protein from Xylella fastidiosa (strain Temecula1 / ATCC 700964).